The chain runs to 373 residues: MRSGFLRSARRLWARRAISRMPPPSEELLARGGPLRAFLERRVGSEAGGLDAGSPQLAAAARLLNEKERELRDTESLLHDENEDLKKLAESEIALCQKEIAELKHRIISLLVPSEDMDGSDLILEVTAGVGGQEAMLFTSEMFDMYQQYAAFKRWHFETLEYFPSELGGLRHASASIGGPEAYRHMKFEGGVHRVQRVPKTERQGRIHTSTMTVAILPQPTEIKLVINPKDLRIDTKRASGAGGQHVNTTDSAVRIVHLPTGIISECQQERSQLKNRELAMKKLRARLYSMRLEEETAKRYSARKIQVGTKGRSEKIRTYNFPQNRVTDHRINKSLHDLESFMQGDCLLDDLIQSLKDYSDYESLVEMISRKD.

The N-terminal 13 residues, 1–13, are a transit peptide targeting the mitochondrion; that stretch reads MRSGFLRSARRLW. The stretch at 56–111 forms a coiled coil; the sequence is QLAAAARLLNEKERELRDTESLLHDENEDLKKLAESEIALCQKEIAELKHRIISLL. Positions 229-293 are GGQ domain; it reads PKDLRIDTKR…LRARLYSMRL (65 aa). Residues 243 to 245 carry the GGQ motif; the sequence is GGQ. Gln245 carries the N5-methylglutamine modification.

Belongs to the prokaryotic/mitochondrial release factor family. Methylation of glutamine in the GGQ triplet by HEMK1 is conserved from bacteria to mammals.

Its subcellular location is the mitochondrion. In terms of biological role, mitochondrial peptide chain release factor that directs the termination of translation in response to the peptide chain termination codons UAA and UAG. The polypeptide is Peptide chain release factor 1-like, mitochondrial (Mtrf1l) (Rattus norvegicus (Rat)).